The sequence spans 353 residues: Sphingosine 1-phosphate receptor 2 (353 aa).

Over 1 to 34 the chain is Extracellular; that stretch reads MGSLYSEYLNPNKVQEHYNYTKETLETQETTSRQ. The N-linked (GlcNAc...) asparagine glycan is linked to Asn19. A helical transmembrane segment spans residues 35-59; the sequence is VASAFIVILCCAIVVENLLVLIAVA. Over 60-66 the chain is Cytoplasmic; that stretch reads RNSKFHS. A helical transmembrane segment spans residues 67–95; the sequence is AMYLFLGNLAASDLLAGVAFVANTLLSGS. The Extracellular segment spans residues 96–109; sequence VTLRLTPVQWFARE. The chain crosses the membrane as a helical span at residues 110–128; the sequence is GSAFITLSASVFSLLAIAI. The Cytoplasmic portion of the chain corresponds to 129–147; the sequence is ERHVAIAKVKLYGSDKSCR. A helical transmembrane segment spans residues 148–173; it reads MLLLIGASWLISLVLGGLPILGWNCL. Residues 174–189 are Extracellular-facing; it reads GHLEACSTVLPLYAKH. The chain crosses the membrane as a helical span at residues 190-210; it reads YVLCVVTIFSIILLAIVALYV. The Cytoplasmic segment spans residues 211–233; that stretch reads RIYCVVRSSHADMAAPQTLALLK. The chain crosses the membrane as a helical span at residues 234 to 255; that stretch reads TVTIVLGVFIVCWLPAFSILLL. At 256–271 the chain is on the extracellular side; the sequence is DYACPVHSCPILYKAH. A helical membrane pass occupies residues 272–292; sequence YFFAVSTLNSLLNPVIYTWRS. Over 293 to 353 the chain is Cytoplasmic; that stretch reads RDLRREVLRP…PTFLEGNTVV (61 aa). Residue Cys305 is the site of S-palmitoyl cysteine attachment.

Belongs to the G-protein coupled receptor 1 family.

It is found in the cell membrane. Its function is as follows. Receptor for the lysosphingolipid sphingosine 1-phosphate (S1P). S1P is a bioactive lysophospholipid that elicits diverse physiological effects on most types of cells and tissues. When expressed in rat HTC4 hepatoma cells, is capable of mediating S1P-induced cell proliferation and suppression of apoptosis. Receptor for the chemokine-like protein FAM19A5. Mediates the inhibitory effect of FAM19A5 on vascular smooth muscle cell proliferation and migration. In lymphoid follicles, couples the binding of S1P to the activation of GNA13 and downstream inhibition of AKT activation leading to suppression of germinal center (GC) B cell growth and migration outside the GC niche. The polypeptide is Sphingosine 1-phosphate receptor 2 (S1PR2) (Homo sapiens (Human)).